A 541-amino-acid polypeptide reads, in one-letter code: Membrane protein insertase YidC (541 aa).

6 helical membrane passes run 7–27 (FLIVAIFLSVFLLWDKWGVTH), 289–309 (YLLTVVNPELVIAPGAIVTLP), 356–376 (IIHSWGYSIITLTLLIKLAFY), 430–450 (LPILVQIPVFISLYWVLLEMV), 463–483 (LSAQDPYYILPLIMGVSMFAQ), and 498–518 (IMMALPFVFTIFFLWFPSGLV).

It belongs to the OXA1/ALB3/YidC family. Type 1 subfamily. As to quaternary structure, interacts with the Sec translocase complex via SecD. Specifically interacts with transmembrane segments of nascent integral membrane proteins during membrane integration.

It is found in the cell inner membrane. In terms of biological role, required for the insertion and/or proper folding and/or complex formation of integral membrane proteins into the membrane. Involved in integration of membrane proteins that insert both dependently and independently of the Sec translocase complex, as well as at least some lipoproteins. Aids folding of multispanning membrane proteins. The polypeptide is Membrane protein insertase YidC (Ruthia magnifica subsp. Calyptogena magnifica).